Reading from the N-terminus, the 477-residue chain is PTS system glucose-specific EIICB component (477 aa).

Over 1–14 the chain is Cytoplasmic; sequence MFKNAFANLQKVGK. A PTS EIIC type-1 domain is found at 1–388; the sequence is MFKNAFANLQ…LDLKTPGRED (388 aa). Residues 15–35 traverse the membrane as a helical segment; the sequence is SLMLPVSVLPIAGILLGVGSA. The Periplasmic portion of the chain corresponds to 36–50; the sequence is NFSWLPAVVSHVMAE. A helical membrane pass occupies residues 51-71; the sequence is AGGSVFANMPLIFAIGVALGF. The Cytoplasmic portion of the chain corresponds to 72 to 79; the sequence is TNNDGVSA. A helical transmembrane segment spans residues 80–100; sequence LAAVVAYGIMVKTMAVVAPLV. The Periplasmic portion of the chain corresponds to 101-111; it reads LHLPAEEIAAK. A helical transmembrane segment spans residues 112–132; it reads HLADTGVLGGIISGAIAAYMF. The Cytoplasmic portion of the chain corresponds to 133–151; it reads NRFYRIKLPEYLGFFAGKR. The chain crosses the membrane as a helical span at residues 152–172; it reads FVPIISGLAAIFTGVVLSFVW. Residues 173–190 lie on the Periplasmic side of the membrane; the sequence is PPIGTAIQAFSQWAAYQN. Residues 191–211 traverse the membrane as a helical segment; it reads PVVAFGIYGFIERCLVPFGLH. Residues 212 to 248 are Cytoplasmic-facing; sequence HIWNVPFQMQIGEYTNAAGQVFHGDIPRYMAGDPTAG. Residues 249–269 traverse the membrane as a helical segment; the sequence is MLSGGFLFKMYGLPAAAIAIW. At 270-279 the chain is on the periplasmic side; the sequence is HSAKPENRAK. Residues 280-300 traverse the membrane as a helical segment; sequence VGGIMISAALTSFLTGITEPI. The Cytoplasmic portion of the chain corresponds to 301–309; the sequence is EFSFMFVAP. Residues 310-330 form a helical membrane-spanning segment; that stretch reads ILYIIHAILAGLAFPICILLG. The Periplasmic portion of the chain corresponds to 331–355; the sequence is MRDGTSFSHGLIDFIVLSGNSSKLW. Residues 356-376 traverse the membrane as a helical segment; the sequence is LFPIVGAGYAIVYYTVFRVLI. The Cytoplasmic segment spans residues 377 to 477; sequence KALDLKTPGR…TEMDEYIRNS (101 aa). The 79-residue stretch at 399-477 folds into the PTS EIIB type-1 domain; sequence SEMAPALVAA…TEMDEYIRNS (79 aa). The active-site Phosphocysteine intermediate; for EIIB activity is C421. At C421 the chain carries Phosphocysteine.

The protein localises to the cell inner membrane. The catalysed reaction is N(pros)-phospho-L-histidyl-[protein] + D-glucose(out) = D-glucose 6-phosphate(in) + L-histidyl-[protein]. In terms of biological role, the phosphoenolpyruvate-dependent sugar phosphotransferase system (sugar PTS), a major carbohydrate active transport system, catalyzes the phosphorylation of incoming sugar substrates concomitantly with their translocation across the cell membrane. The enzyme II complex composed of PtsG and Crr is involved in glucose transport. Also functions as a chemoreceptor monitoring the environment for changes in sugar concentration. It can also phosphorylate mannose, methyl alpha-glucoside and 2-deoxy-glucose. This is PTS system glucose-specific EIICB component (ptsG) from Salmonella typhimurium (strain LT2 / SGSC1412 / ATCC 700720).